A 794-amino-acid chain; its full sequence is Copper-exporting P-type ATPase (794 aa).

HMA domains lie at 4–69 and 71–137; these read TTLT…YDVA and EQVE…YDAE. Positions 15, 18, 82, and 85 each coordinate Cu(+). Transmembrane regions (helical) follow at residues 161-181, 186-206, 225-245, 255-275, 410-430, and 437-457; these read IISA…ISPI, ILVN…IIGW, VLVA…MMMW, LYFE…YLEA, YFVP…IIFV, and PALV…LGLA. Asp-494 (4-aspartylphosphate intermediate) is an active-site residue. Mg(2+) is bound by residues Asp-689 and Asp-693. A run of 2 helical transmembrane segments spans residues 747–767 and 773–789; these read LFWA…GLLA and AAMA…ALRL.

This sequence belongs to the cation transport ATPase (P-type) (TC 3.A.3) family. Type IB subfamily.

Its subcellular location is the cell membrane. It catalyses the reaction Cu(+)(in) + ATP + H2O = Cu(+)(out) + ADP + phosphate + H(+). In terms of biological role, involved in copper export. The sequence is that of Copper-exporting P-type ATPase (copA) from Staphylococcus epidermidis (strain ATCC 35984 / DSM 28319 / BCRC 17069 / CCUG 31568 / BM 3577 / RP62A).